Consider the following 217-residue polypeptide: Large ribosomal subunit protein uL16 (217 aa).

It belongs to the universal ribosomal protein uL16 family. Component of the small ribosomal subunit. Mature ribosomes consist of a small (40S) and a large (60S) subunit. The 40S subunit contains about 33 different proteins and 1 molecule of RNA (18S). The 60S subunit contains about 49 different proteins and 3 molecules of RNA (25S, 5.8S and 5S).

This Dictyostelium discoideum (Social amoeba) protein is Large ribosomal subunit protein uL16 (rpl10).